Here is an 873-residue protein sequence, read N- to C-terminus: Potassium voltage-gated channel subfamily KQT member 3 (873 aa).

Residues 1-41 form a disordered region; that stretch reads MGLKARRAAGAAGGGGGEGGGGGGGAANPAGGDSAVAGDEE. The Cytoplasmic segment spans residues 1-121; sequence MGLKARRAAG…IYDALERPRG (121 aa). A compositionally biased stretch (gly residues) spans 11-26; that stretch reads AAGGGGGEGGGGGGGA. T82 carries the phosphothreonine modification. Residues 122 to 144 form a helical membrane-spanning segment; that stretch reads WALLYHALVFLIVLGCLILAVLT. Over 145–154 the chain is Extracellular; it reads TFKEYETVSG. A helical transmembrane segment spans residues 155 to 176; that stretch reads DWLLLLETFAIFIFGAEFALRI. Topologically, residues 177–194 are cytoplasmic; it reads WAAGCCCRYKGWRGRLKF. Residues 195 to 214 form a helical membrane-spanning segment; sequence ARKPLCMLDIFVLIASVPVV. Over 215 to 226 the chain is Extracellular; that stretch reads AVGNQGNVLATS. A helical; Voltage-sensor membrane pass occupies residues 227 to 245; it reads LRSLRFLQILRMLRMDRRG. Residue R244 participates in a 1,2-diacyl-sn-glycero-3-phospho-(1D-myo-inositol-4,5-bisphosphate) binding. The Cytoplasmic segment spans residues 246 to 257; it reads GTWKLLGSAICA. The helical transmembrane segment at 258 to 283 threads the bilayer; the sequence is HSKELITAWYIGFLTLILSSFLVYLV. Residue K260 coordinates a 1,2-diacyl-sn-glycero-3-phospho-(1D-myo-inositol-4,5-bisphosphate). Residues 284-303 lie on the Extracellular side of the membrane; that stretch reads EKDVPEMDAQGEEMKEEFET. The segment at residues 304-316 is an intramembrane region (pore-forming); the sequence is YADALWWGLITLA. A Selectivity filter motif is present at residues 317 to 322; the sequence is TIGYGD. Over 317 to 327 the chain is Extracellular; that stretch reads TIGYGDKTPKT. A helical transmembrane segment spans residues 328 to 354; the sequence is WEGRLIAATFSLIGVSFFALPAGILGS. At 355–873 the chain is on the cytoplasmic side; that stretch reads GLALKVQEQH…SIWTPSNKPT (519 aa). Positions 357–538 are mediates interaction with calmodulin; that stretch reads ALKVQEQHRQ…RLYKKKFKET (182 aa). Position 367 (K367) interacts with a 1,2-diacyl-sn-glycero-3-phospho-(1D-myo-inositol-4,5-bisphosphate). 3 disordered regions span residues 575-603, 723-742, and 766-873; these read PGPPSTPKHKKSQKGSAFTYPSQQSPRNE, RGGPSSTKAQANLPSSGSTY, and ELQG…NKPT. Polar residues-rich tracts occupy residues 588-601, 725-741, and 844-873; these read KGSAFTYPSQQSPR, GPSSTKAQANLPSSGST, and DPFTPSGSMPMSSTGDGISDSIWTPSNKPT.

This sequence belongs to the potassium channel family. KQT (TC 1.A.1.15) subfamily. Kv7.3/KCNQ3 sub-subfamily. In terms of assembly, heterotetramer with KCNQ2; forms heterotetrameric M-channel responsible for the native M-current. Interacts with calmodulin; the interaction is calcium-independent, constitutive and participates in the proper assembly of a functional M-channel. Heteromultimer with KCNQ5. May associate with KCNE2. Interacts with IQCJ-SCHIP1. Interacts (via the pore module) with SLC5A3/SMIT1; forms a coregulatory complex that alters ion selectivity, voltage dependence and gating kinetics of the channel. KCNQ2/KCNQ3 are ubiquitinated by NEDD4L. Ubiquitination leads to protein degradation. Degradation induced by NEDD4L is inhibited by USP36. As to expression, expressed in brain and sympathetic ganglia. In brain, expressed in cortex, hippocampus and at much lower levels in cerebellum. In sympathetic ganglia, expressed at approximately equal levels in both superior cervical ganglia and prevertebral ganglia.

It localises to the cell membrane. The catalysed reaction is K(+)(in) = K(+)(out). It carries out the reaction Rb(+)(in) = Rb(+)(out). The enzyme catalyses Cs(+)(in) = Cs(+)(out). It catalyses the reaction Na(+)(in) = Na(+)(out). With respect to regulation, phosphatidylinositol-4,5-bisphosphate (PIP2) potentiates the activation of KCNQ channels by enhancing the electro-mechanical coupling of the voltage-sensing domain (VSD) and the pore-forming domain (PD). In the closed state of the channel, PIP2 is anchored at the S2-S3 loop; upon channel activation, PIP2 interacts with the S4-S5 linker and is involved in channel gating. Calcium suppresses KCNQ2-KCNQ3 channel currents, with calcium-bound calmodulin inducing a change in channel configuration which leads to the reduction of channel affinity for PIP2 and subsequent current suppression. M-channel is blocked by XE991. Pore-forming subunit of the voltage-gated potassium (Kv) M-channel which is responsible for the M-current, a key controller of neuronal excitability. M-channel is composed of pore-forming subunits KCNQ2 and KCNQ3 assembled as heterotetramers, each subunit containing a voltage sensing domain (VSD) and a pore-forming domain (PD). The native M-current has a slowly activating and deactivating potassium conductance which plays a critical role in determining the subthreshold electrical excitability of neurons as well as the responsiveness to synaptic inputs. M-channel is selectively permeable in vitro to other cations besides potassium, in decreasing order of affinity K(+) &gt; Rb(+) &gt; Cs(+) &gt; Na(+). M-channel association with SLC5A3/SMIT1 alters channel ion selectivity, increasing Na(+) and Cs(+) permeation relative to K(+). Suppressed by activation of M1 muscarinic acetylcholine receptors. KCNQ3 also associates with KCNQ5 to form a functional channel in vitro and may also contribute to the M-current in brain. This chain is Potassium voltage-gated channel subfamily KQT member 3, found in Rattus norvegicus (Rat).